Consider the following 614-residue polypeptide: Translation initiation factor IF-2 (614 aa).

One can recognise a tr-type G domain in the interval 115 to 283 (ARAPIVTIMG…ILLIAELNNY (169 aa)). Residues 124–131 (GHVDHGKT) are G1. 124–131 (GHVDHGKT) serves as a coordination point for GTP. The segment at 149 to 153 (GITQH) is G2. The interval 170 to 173 (DTPG) is G3. GTP is bound by residues 170–174 (DTPGH) and 224–227 (NKMD). Residues 224 to 227 (NKMD) are G4. Residues 260–262 (SAL) form a G5 region.

It belongs to the TRAFAC class translation factor GTPase superfamily. Classic translation factor GTPase family. IF-2 subfamily.

The protein localises to the cytoplasm. Functionally, one of the essential components for the initiation of protein synthesis. Protects formylmethionyl-tRNA from spontaneous hydrolysis and promotes its binding to the 30S ribosomal subunits. Also involved in the hydrolysis of GTP during the formation of the 70S ribosomal complex. This Ureaplasma parvum serovar 3 (strain ATCC 27815 / 27 / NCTC 11736) protein is Translation initiation factor IF-2.